The following is an 88-amino-acid chain: Small ribosomal subunit protein uS19 (88 aa).

This sequence belongs to the universal ribosomal protein uS19 family.

Functionally, protein S19 forms a complex with S13 that binds strongly to the 16S ribosomal RNA. The chain is Small ribosomal subunit protein uS19 from Mycoplasma mycoides subsp. mycoides SC (strain CCUG 32753 / NCTC 10114 / PG1).